Consider the following 211-residue polypeptide: Molybdenum cofactor guanylyltransferase (211 aa).

GTP is bound by residues 12-14 (LAG), lysine 25, asparagine 53, aspartate 71, and aspartate 101. Residue aspartate 101 coordinates Mg(2+).

Belongs to the MobA family. Monomer. Requires Mg(2+) as cofactor.

It is found in the cytoplasm. The enzyme catalyses Mo-molybdopterin + GTP + H(+) = Mo-molybdopterin guanine dinucleotide + diphosphate. Transfers a GMP moiety from GTP to Mo-molybdopterin (Mo-MPT) cofactor (Moco or molybdenum cofactor) to form Mo-molybdopterin guanine dinucleotide (Mo-MGD) cofactor. In Acidovorax ebreus (strain TPSY) (Diaphorobacter sp. (strain TPSY)), this protein is Molybdenum cofactor guanylyltransferase.